Reading from the N-terminus, the 528-residue chain is Chromosomal replication initiator protein DnaA (528 aa).

The tract at residues 1-104 (MNDDPNALAR…PVDDEPESDP (104 aa)) is domain I, interacts with DnaA modulators. Residues 95–158 (PVDDEPESDP…TDFEEVDDDR (64 aa)) are disordered. The span at 104–123 (PPSRDHRPEPEPLHTPRHLE) shows a compositional bias: basic and acidic residues. The domain II stretch occupies residues 105–187 (PSRDHRPEPE…GPAPSATGGN (83 aa)). Over residues 149–158 (TDFEEVDDDR) the composition is skewed to acidic residues. Residues 188–404 (SLNAKYTFDT…GALIRVTAFA (217 aa)) form a domain III, AAA+ region region. The ATP site is built by Gly232, Gly234, Lys235, and Thr236. Positions 405-528 (SLNRQPLDLT…TARIKQRSKR (124 aa)) are domain IV, binds dsDNA.

It belongs to the DnaA family. As to quaternary structure, oligomerizes as a right-handed, spiral filament on DNA at oriC.

It is found in the cytoplasm. Plays an essential role in the initiation and regulation of chromosomal replication. ATP-DnaA binds to the origin of replication (oriC) to initiate formation of the DNA replication initiation complex once per cell cycle. Binds the DnaA box (a 9 base pair repeat at the origin) and separates the double-stranded (ds)DNA. Forms a right-handed helical filament on oriC DNA; dsDNA binds to the exterior of the filament while single-stranded (ss)DNA is stabiized in the filament's interior. The ATP-DnaA-oriC complex binds and stabilizes one strand of the AT-rich DNA unwinding element (DUE), permitting loading of DNA polymerase. After initiation quickly degrades to an ADP-DnaA complex that is not apt for DNA replication. Binds acidic phospholipids. The polypeptide is Chromosomal replication initiator protein DnaA (Rhodococcus jostii (strain RHA1)).